A 2175-amino-acid polypeptide reads, in one-letter code: Homeobox protein cut (2175 aa).

2 disordered regions span residues 139–170 (NLLA…QQSG) and 249–432 (GNVK…GQPA). 2 stretches are compositionally biased toward low complexity: residues 153 to 169 (LLSA…LQQS) and 249 to 268 (GNVK…SNNS). The stretch at 265–343 (SNNSHQDEEE…ENKDAGEASL (79 aa)) forms a coiled coil. The span at 271-294 (DEEELDDEEEDEEEDEDEDDEEEN) shows a compositional bias: acidic residues. The segment covering 309 to 320 (QQETRTEPSATT) has biased composition (polar residues). A compositionally biased stretch (low complexity) spans 344–359 (NVSNNHNTTDSNNSCS). The span at 360–374 (RKNNNGGNESEQHVA) shows a compositional bias: polar residues. Positions 384 to 415 (NNNTNTSNNNNTSNTATSNTNNNNNNNSSSGN) are enriched in low complexity. Residues 433 to 499 (VLLAAKDKEI…NEALAEATAL (67 aa)) adopt a coiled-coil conformation. The span at 503–515 (ASTNNNNNSQSSD) shows a compositional bias: low complexity. Disordered stretches follow at residues 503–600 (ASTN…KIKK) and 656–765 (ASDA…NTNA). Residues 546–568 (AEDDEEDEDQAMLVDSEEAEDKP) are compositionally biased toward acidic residues. Basic residues predominate over residues 673–696 (QQQHQHQQQHHQQQHLHQQHHHHL). The segment covering 697 to 710 (QQQPNSGSNSNPAS) has biased composition (low complexity). Basic residues predominate over residues 714 to 735 (HHGHHLHGHGLLHPSSAHHLHH). Positions 738-765 (TESNSNSSTPTAAGNNNGSNNSSSNTNA) are enriched in low complexity. Residues 877-964 (NMDKYANQAL…VMLLKSLIPK (88 aa)) constitute a DNA-binding region (CUT 1). Disordered stretches follow at residues 1001–1083 (LMKQ…HDDQ) and 1197–1289 (QRSS…EFAA). Basic and acidic residues-rich tracts occupy residues 1009–1030 (QHRE…EDSK) and 1062–1083 (QRER…HDDQ). Positions 1056–1161 (EQAAAQQRER…QQQAAQAQAQ (106 aa)) form a coiled coil. The segment covering 1249 to 1282 (GAPPTAAPPTGGASSNSAAPSPLSNSILPPALSS) has biased composition (low complexity). Positions 1330-1417 (QQQFDMFNNL…VHKLVASQYK (88 aa)) form a DNA-binding region, CUT 2. Positions 1463–1522 (AQAQHLMQQMQAAAMSAAMQQQQVAQAQQQAQQAQQAQQHLQQQAQQHLQQQQHLAQQQH) form a coiled coil. Over residues 1507–1540 (AQQHLQQQQHLAQQQHPHQQHHQAAAAAAALHHQ) the composition is skewed to low complexity. Disordered stretches follow at residues 1507–1588 (AQQH…PMLM), 1695–1747 (ERRE…PSKK), 1803–1826 (QVPH…ATPF), 1922–1955 (RSDD…DKTT), 2069–2097 (KQEE…QKLK), and 2113–2175 (SSTG…GWNY). Gly residues predominate over residues 1564–1573 (AQPGGPGGNQ). The segment at residues 1608–1695 (YEMAALTQDL…VERLQLLKNE (88 aa)) is a DNA-binding region (CUT 3). The segment covering 1709-1732 (NQQDNSSDTSSNDTNDFYTSSPGP) has biased composition (low complexity). Residues 1745 to 1804 (SKKQRVLFSEEQKEALRLAFALDPYPNVGTIEFLANELGLATRTITNWFHNHRMRLKQQV) constitute a DNA-binding region (homeobox). Residues Ser-1940 and Ser-1944 each carry the phosphoserine modification. Over residues 2126–2135 (PLAPPPPPPA) the composition is skewed to pro residues. Residues 2136-2175 (ASSSIVSGESTTSSSSSSNTSSSTPAVTTAAATAAAGWNY) show a composition bias toward low complexity.

The protein belongs to the CUT homeobox family. As to expression, detected in many cells in the central nervous system, all external sensory organs, some peripheral neurons, and in the non-neural cells of the spiracles and the Malpighian tubules.

Its subcellular location is the nucleus. Regulator of cell fate decisions in multiple lineages. Specifically, functions as a determination factor that specifies sensory organ identity in precursor cells. Probably also involved in cell type specification of Malpighian tubules. In absence of cut gene external sensory organs are transformed into chordotonal organs. The polypeptide is Homeobox protein cut (ct) (Drosophila melanogaster (Fruit fly)).